Reading from the N-terminus, the 292-residue chain is ATP synthase gamma chain (292 aa).

The protein belongs to the ATPase gamma chain family. In terms of assembly, F-type ATPases have 2 components, CF(1) - the catalytic core - and CF(0) - the membrane proton channel. CF(1) has five subunits: alpha(3), beta(3), gamma(1), delta(1), epsilon(1). CF(0) has three main subunits: a, b and c.

Its subcellular location is the cell inner membrane. Its function is as follows. Produces ATP from ADP in the presence of a proton gradient across the membrane. The gamma chain is believed to be important in regulating ATPase activity and the flow of protons through the CF(0) complex. The protein is ATP synthase gamma chain of Rhodopseudomonas palustris (strain BisB18).